A 612-amino-acid chain; its full sequence is Peroxisomal carnitine O-octanoyltransferase (612 aa).

At M1 the chain carries N-acetylmethionine. N6-succinyllysine is present on residues K40 and K57. The Proton acceptor role is filled by H327. CoA is bound by residues K406 and 410–417 (KKEALHPD). An N6-acetyllysine; alternate modification is found at K406. K406 carries the N6-succinyllysine; alternate modification. (R)-carnitine contacts are provided by Y439, T441, and T452. Positions 610 to 612 (AHL) match the Microbody targeting signal motif.

Belongs to the carnitine/choline acetyltransferase family. In terms of tissue distribution, liver.

The protein localises to the peroxisome. It catalyses the reaction octanoyl-CoA + (R)-carnitine = O-octanoyl-(R)-carnitine + CoA. It carries out the reaction 4,8-dimethylnonanoyl-CoA + (R)-carnitine = O-4,8-dimethylnonanoyl-(R)-carnitine + CoA. It participates in lipid metabolism; fatty acid beta-oxidation. In terms of biological role, beta-oxidation of fatty acids. The highest activity concerns the C6 to C10 chain length substrate. This chain is Peroxisomal carnitine O-octanoyltransferase (Crot), found in Rattus norvegicus (Rat).